Consider the following 245-residue polypeptide: 1-(5-phosphoribosyl)-5-[(5-phosphoribosylamino)methylideneamino] imidazole-4-carboxamide isomerase (245 aa).

Asp-7 (proton acceptor) is an active-site residue. Asp-129 serves as the catalytic Proton donor.

This sequence belongs to the HisA/HisF family.

The protein resides in the cytoplasm. It catalyses the reaction 1-(5-phospho-beta-D-ribosyl)-5-[(5-phospho-beta-D-ribosylamino)methylideneamino]imidazole-4-carboxamide = 5-[(5-phospho-1-deoxy-D-ribulos-1-ylimino)methylamino]-1-(5-phospho-beta-D-ribosyl)imidazole-4-carboxamide. Its pathway is amino-acid biosynthesis; L-histidine biosynthesis; L-histidine from 5-phospho-alpha-D-ribose 1-diphosphate: step 4/9. This is 1-(5-phosphoribosyl)-5-[(5-phosphoribosylamino)methylideneamino] imidazole-4-carboxamide isomerase from Escherichia coli O7:K1 (strain IAI39 / ExPEC).